Here is a 202-residue protein sequence, read N- to C-terminus: Putative scarecrow-like protein 16 (202 aa).

The VHIID stretch occupies residues 1 to 26 (MQIPTLIDSMANKLHKKPPPLLKLTV). The GRAS domain maps to 1–202 (MQIPTLIDSM…RVERLEPKSR (202 aa)). The leucine repeat II (LRII) stretch occupies residues 45 to 82 (ELGSKLVNFATTRNVAMEFRIISSSYSDGLSSLIEQLR). Residues 92–184 (LVVNCHMMLH…EADISWKIDN (93 aa)) form a PFYRE region. Positions 187 to 202 (AKEGAERVERLEPKSR) are SAW.

This sequence belongs to the GRAS family. Expressed in seedlings, leaves and flowers.

The protein resides in the nucleus. Probable transcription factor involved in plant development. The polypeptide is Putative scarecrow-like protein 16 (SCL16) (Arabidopsis thaliana (Mouse-ear cress)).